Consider the following 2409-residue polypeptide: Reducing polyketide synthase FUB1 (2409 aa).

Positions 1–43 are enriched in low complexity; that stretch reads MTLSNGSNGANGTSNGHGAHPSANGFHNAANGGANNGTPNGGA. The disordered stretch occupies residues 1 to 49; it reads MTLSNGSNGANGTSNGHGAHPSANGFHNAANGGANNGTPNGGAEYNASL. The Ketosynthase family 3 (KS3) domain occupies 57 to 479; it reads SSAIAVIGVS…GANAHAVLDD (423 aa). Active-site for beta-ketoacyl synthase activity residues include C230, H365, and H403. The malonyl-CoA:ACP transacylase (MAT) domain stretch occupies residues 608-929; it reads TFIFTGQGAQ…FSAIKRKQDA (322 aa). S699 functions as the For malonyltransferase activity in the catalytic mechanism. The segment at 994–1127 is N-terminal hotdog fold; that stretch reads LELLGVRDPR…GLVSTSYKRE (134 aa). Positions 994–1307 constitute a PKS/mFAS DH domain; that stretch reads LELLGVRDPR…TVPLRGASDP (314 aa). The interval 995–1302 is dehydratase (DH) domain; sequence ELLGVRDPRS…LEGCKTVPLR (308 aa). Residue H1026 is the Proton acceptor; for dehydratase activity of the active site. Residues 1155–1307 form a C-terminal hotdog fold region; the sequence is LPSVDPTVFY…TVPLRGASDP (153 aa). D1220 serves as the catalytic Proton donor; for dehydratase activity. An enoyl reductase (ER) domain region spans residues 1713 to 2025; the sequence is GLLDTLEYLS…SGGHVGKIVL (313 aa). The interval 2049 to 2225 is ketoreductase (KR) domain; the sequence is ATYVLIGGLG…AATSINLSLV (177 aa). The Carrier domain maps to 2328-2405; sequence EVYEIVLQQL…GFAKKVMAKS (78 aa). The residue at position 2365 (S2365) is an O-(pantetheine 4'-phosphoryl)serine.

Its pathway is mycotoxin biosynthesis. Its function is as follows. Reducing polyketide synthase; part of the gene cluster that mediates the biosynthesis of fusaric acid, a mycotoxin with low to moderate toxicity to animals and humans, but with high phytotoxic properties. L-aspartate is suggested as fusaric acid amino acid precursor that is activated and further processed to O-acetyl-L-homoserine by cluster enzymes aspartate kinase FUB3 and homoserine O-acetyltransferase FUB5, as well as enzymes of the primary metabolism. The polyketide synthase (PKS) FUB1 generates the triketide trans-2-hexenal which is presumptively released by the hydrolase FUB4 and linked to the NRPS-bound amino acid precursor by NAD(P)-dependent dehydrogenase FUB6. FUB1, FUB4, and the non-canonical NRPS Fub8 may form an enzyme complex. Further processing of the NRPS-bound intermediate might be carried out by FUB6 and the sulfhydrylase FUB7, enabling a spontaneous electrocyclization to close the carbon backbone of fusaric acid. Dihydrofusaric acid is likely to be released via reduction by the thioester reductase (TR) domain of FUB8 whereupon the final oxidation to fusaric acid may (also) be performed by the FMN-dependent dehydrogenase FUB9. The sequence is that of Reducing polyketide synthase FUB1 from Gibberella moniliformis (strain M3125 / FGSC 7600) (Maize ear and stalk rot fungus).